The primary structure comprises 307 residues: Protein TIPIN homolog (307 aa).

2 disordered regions span residues 1–50 (MASL…SQDA) and 252–279 (ASMD…LSNE). The segment covering 262–271 (PLPPSQPPTP) has biased composition (pro residues).

The protein belongs to the CSM3 family.

Its subcellular location is the cytoplasm. The protein resides in the nucleus. In terms of biological role, required for normal progression of S-phase. Important for cell survival after DNA damage or replication stress. The protein is Protein TIPIN homolog of Drosophila melanogaster (Fruit fly).